The primary structure comprises 356 residues: tRNA N6-adenosine threonylcarbamoyltransferase (356 aa).

Histidine 115 and histidine 119 together coordinate Fe cation. Substrate-binding positions include 138 to 142, aspartate 171, glycine 184, and asparagine 283; that span reads LVSGG. Aspartate 311 serves as a coordination point for Fe cation.

Belongs to the KAE1 / TsaD family. Fe(2+) is required as a cofactor.

The protein localises to the cytoplasm. The catalysed reaction is L-threonylcarbamoyladenylate + adenosine(37) in tRNA = N(6)-L-threonylcarbamoyladenosine(37) in tRNA + AMP + H(+). In terms of biological role, required for the formation of a threonylcarbamoyl group on adenosine at position 37 (t(6)A37) in tRNAs that read codons beginning with adenine. Is involved in the transfer of the threonylcarbamoyl moiety of threonylcarbamoyl-AMP (TC-AMP) to the N6 group of A37, together with TsaE and TsaB. TsaD likely plays a direct catalytic role in this reaction. This Prochlorococcus marinus (strain MIT 9515) protein is tRNA N6-adenosine threonylcarbamoyltransferase.